We begin with the raw amino-acid sequence, 65 residues long: Conotoxin Lt5.1 (65 aa).

An N-terminal signal peptide occupies residues 1 to 19 (MRCLPVFIILLLLIPSAPS). Residues 20–48 (VDAQRKTKDDVPLASFHDNAKRTLKRLWN) constitute a propeptide that is removed on maturation.

It belongs to the conotoxin T superfamily. Post-translationally, contains 2 disulfide bonds that can be either 'C1-C3, C2-C4' or 'C1-C4, C2-C3', since these disulfide connectivities have been observed for conotoxins with cysteine framework V (for examples, see AC P0DQQ7 and AC P81755). Expressed by the venom duct.

The protein localises to the secreted. This chain is Conotoxin Lt5.1, found in Conus litteratus (Lettered cone).